A 25-amino-acid polypeptide reads, in one-letter code: Retinol-binding protein 3 (25 aa).

The protein localises to the secreted. It is found in the extracellular space. The protein resides in the extracellular matrix. Its subcellular location is the interphotoreceptor matrix. IRBP shuttles 11-cis and all trans retinoids between the retinol isomerase in the pigment epithelium and the visual pigments in the photoreceptor cells of the retina. The sequence is that of Retinol-binding protein 3 (RBP3) from Sus scrofa (Pig).